The following is a 255-amino-acid chain: 14-3-3 protein 5 (255 aa).

The protein belongs to the 14-3-3 family. As to quaternary structure, homodimer.

The chain is 14-3-3 protein 5 (TFT5) from Solanum lycopersicum (Tomato).